A 616-amino-acid polypeptide reads, in one-letter code: Proline--tRNA ligase (616 aa).

This sequence belongs to the class-II aminoacyl-tRNA synthetase family. ProS type 1 subfamily. Homodimer.

The protein localises to the cytoplasm. It carries out the reaction tRNA(Pro) + L-proline + ATP = L-prolyl-tRNA(Pro) + AMP + diphosphate. Its function is as follows. Catalyzes the attachment of proline to tRNA(Pro) in a two-step reaction: proline is first activated by ATP to form Pro-AMP and then transferred to the acceptor end of tRNA(Pro). As ProRS can inadvertently accommodate and process non-cognate amino acids such as alanine and cysteine, to avoid such errors it has two additional distinct editing activities against alanine. One activity is designated as 'pretransfer' editing and involves the tRNA(Pro)-independent hydrolysis of activated Ala-AMP. The other activity is designated 'posttransfer' editing and involves deacylation of mischarged Ala-tRNA(Pro). The misacylated Cys-tRNA(Pro) is not edited by ProRS. The chain is Proline--tRNA ligase from Lactococcus lactis subsp. cremoris (strain MG1363).